A 396-amino-acid polypeptide reads, in one-letter code: 1-deoxy-D-xylulose 5-phosphate reductoisomerase (396 aa).

NADPH contacts are provided by threonine 13, glycine 14, serine 15, isoleucine 16, and asparagine 127. Position 128 (lysine 128) interacts with 1-deoxy-D-xylulose 5-phosphate. Glutamate 129 serves as a coordination point for NADPH. Aspartate 153 serves as a coordination point for Mn(2+). Serine 154, glutamate 155, serine 184, and histidine 207 together coordinate 1-deoxy-D-xylulose 5-phosphate. Glutamate 155 provides a ligand contact to Mn(2+). Glycine 213 is an NADPH binding site. 1-deoxy-D-xylulose 5-phosphate-binding residues include serine 220, asparagine 225, lysine 226, and glutamate 229. Glutamate 229 is a Mn(2+) binding site.

Belongs to the DXR family. Mg(2+) is required as a cofactor. Requires Mn(2+) as cofactor.

The enzyme catalyses 2-C-methyl-D-erythritol 4-phosphate + NADP(+) = 1-deoxy-D-xylulose 5-phosphate + NADPH + H(+). It functions in the pathway isoprenoid biosynthesis; isopentenyl diphosphate biosynthesis via DXP pathway; isopentenyl diphosphate from 1-deoxy-D-xylulose 5-phosphate: step 1/6. Functionally, catalyzes the NADPH-dependent rearrangement and reduction of 1-deoxy-D-xylulose-5-phosphate (DXP) to 2-C-methyl-D-erythritol 4-phosphate (MEP). The chain is 1-deoxy-D-xylulose 5-phosphate reductoisomerase from Pseudomonas savastanoi pv. phaseolicola (strain 1448A / Race 6) (Pseudomonas syringae pv. phaseolicola (strain 1448A / Race 6)).